A 380-amino-acid chain; its full sequence is Cytochrome b (380 aa).

Transmembrane regions (helical) follow at residues 34–54, 78–99, 114–134, and 179–199; these read FGSL…LLAA, WLIR…YLHI, WNTG…GYVL, and FFTL…IHLT. 2 residues coordinate heme b: His84 and His98. Heme b-binding residues include His183 and His197. His202 serves as a coordination point for a ubiquinone. 4 helical membrane passes run 227–247, 289–309, 321–341, and 348–368; these read LKDI…ALFS, LGGV…PLLH, FSQL…WVGS, and FIII…ILFP.

It belongs to the cytochrome b family. In terms of assembly, the cytochrome bc1 complex contains 11 subunits: 3 respiratory subunits (MT-CYB, CYC1 and UQCRFS1), 2 core proteins (UQCRC1 and UQCRC2) and 6 low-molecular weight proteins (UQCRH/QCR6, UQCRB/QCR7, UQCRQ/QCR8, UQCR10/QCR9, UQCR11/QCR10 and a cleavage product of UQCRFS1). This cytochrome bc1 complex then forms a dimer. The cofactor is heme b.

It localises to the mitochondrion inner membrane. Component of the ubiquinol-cytochrome c reductase complex (complex III or cytochrome b-c1 complex) that is part of the mitochondrial respiratory chain. The b-c1 complex mediates electron transfer from ubiquinol to cytochrome c. Contributes to the generation of a proton gradient across the mitochondrial membrane that is then used for ATP synthesis. In Antigone antigone (Sarus crane), this protein is Cytochrome b (MT-CYB).